The chain runs to 295 residues: Malonyl-[acyl-carrier protein] O-methyltransferase (295 aa).

It belongs to the methyltransferase superfamily.

The enzyme catalyses malonyl-[ACP] + S-adenosyl-L-methionine = malonyl-[ACP] methyl ester + S-adenosyl-L-homocysteine. It participates in cofactor biosynthesis; biotin biosynthesis. In terms of biological role, converts the free carboxyl group of a malonyl-thioester to its methyl ester by transfer of a methyl group from S-adenosyl-L-methionine (SAM). It allows to synthesize pimeloyl-ACP via the fatty acid synthetic pathway. This is Malonyl-[acyl-carrier protein] O-methyltransferase from Halorhodospira halophila (strain DSM 244 / SL1) (Ectothiorhodospira halophila (strain DSM 244 / SL1)).